The chain runs to 356 residues: S-adenosylmethionine:tRNA ribosyltransferase-isomerase (356 aa).

This sequence belongs to the QueA family. In terms of assembly, monomer.

It localises to the cytoplasm. The catalysed reaction is 7-aminomethyl-7-carbaguanosine(34) in tRNA + S-adenosyl-L-methionine = epoxyqueuosine(34) in tRNA + adenine + L-methionine + 2 H(+). It functions in the pathway tRNA modification; tRNA-queuosine biosynthesis. Its function is as follows. Transfers and isomerizes the ribose moiety from AdoMet to the 7-aminomethyl group of 7-deazaguanine (preQ1-tRNA) to give epoxyqueuosine (oQ-tRNA). This is S-adenosylmethionine:tRNA ribosyltransferase-isomerase from Escherichia coli O6:H1 (strain CFT073 / ATCC 700928 / UPEC).